Reading from the N-terminus, the 351-residue chain is Probable cell division control protein 7 homolog 1 (351 aa).

A Protein kinase domain is found at 21 to 341 (YTPIEKIGEG…ASDALSHPFF (321 aa)). ATP-binding positions include 27 to 35 (IGEGSFSVV) and Lys50. Asp137 (proton acceptor) is an active-site residue.

It belongs to the protein kinase superfamily. Ser/Thr protein kinase family. CDC7 subfamily. It depends on Mg(2+) as a cofactor.

The catalysed reaction is L-seryl-[protein] + ATP = O-phospho-L-seryl-[protein] + ADP + H(+). The enzyme catalyses L-threonyl-[protein] + ATP = O-phospho-L-threonyl-[protein] + ADP + H(+). Functionally, serine/threonine-protein kinase. Needed for the initiation of DNA synthesis during mitosis as well as for synaptonemal complex formation and commitment to recombination during meiosis. This is Probable cell division control protein 7 homolog 1 (CDC7-1) from Encephalitozoon cuniculi (strain GB-M1) (Microsporidian parasite).